We begin with the raw amino-acid sequence, 324 residues long: DNA repair and recombination protein RadA (324 aa).

Residue 114-121 participates in ATP binding; that stretch reads GEFGSGKT.

The protein belongs to the eukaryotic RecA-like protein family.

Involved in DNA repair and in homologous recombination. Binds and assemble on single-stranded DNA to form a nucleoprotein filament. Hydrolyzes ATP in a ssDNA-dependent manner and promotes DNA strand exchange between homologous DNA molecules. The sequence is that of DNA repair and recombination protein RadA from Sulfurisphaera tokodaii (strain DSM 16993 / JCM 10545 / NBRC 100140 / 7) (Sulfolobus tokodaii).